Consider the following 206-residue polypeptide: Outer-membrane lipoprotein LolB (206 aa).

Residues 1–18 (MSLLKNLLAPCLALLLAG) form the signal peptide. A lipid anchor (N-palmitoyl cysteine) is attached at cysteine 19. The S-diacylglycerol cysteine moiety is linked to residue cysteine 19.

The protein belongs to the LolB family. In terms of assembly, monomer.

The protein resides in the cell outer membrane. Its function is as follows. Plays a critical role in the incorporation of lipoproteins in the outer membrane after they are released by the LolA protein. The polypeptide is Outer-membrane lipoprotein LolB (Stutzerimonas stutzeri (strain A1501) (Pseudomonas stutzeri)).